The following is a 168-amino-acid chain: Small ribosomal subunit protein uS5 (168 aa).

Residues 13-76 (LKEQVVDIKR…EDAKKNLIHV (64 aa)) form the S5 DRBM domain.

This sequence belongs to the universal ribosomal protein uS5 family. In terms of assembly, part of the 30S ribosomal subunit. Contacts proteins S4 and S8.

With S4 and S12 plays an important role in translational accuracy. Its function is as follows. Located at the back of the 30S subunit body where it stabilizes the conformation of the head with respect to the body. This Alkaliphilus oremlandii (strain OhILAs) (Clostridium oremlandii (strain OhILAs)) protein is Small ribosomal subunit protein uS5.